Here is a 429-residue protein sequence, read N- to C-terminus: UPF0597 protein AHA_1619 (429 aa).

The protein belongs to the UPF0597 family.

In Aeromonas hydrophila subsp. hydrophila (strain ATCC 7966 / DSM 30187 / BCRC 13018 / CCUG 14551 / JCM 1027 / KCTC 2358 / NCIMB 9240 / NCTC 8049), this protein is UPF0597 protein AHA_1619.